A 317-amino-acid polypeptide reads, in one-letter code: L-lactate dehydrogenase (317 aa).

NAD(+) contacts are provided by Val-16, Asp-37, and Tyr-68. Substrate-binding positions include Gln-85, Arg-91, 123–126, and 151–154; these read NPCD and DSAR. 121 to 123 contributes to the NAD(+) binding site; sequence ASN. Catalysis depends on His-178, which acts as the Proton acceptor. Tyr-222 is modified (phosphotyrosine). Thr-231 serves as a coordination point for substrate.

It belongs to the LDH/MDH superfamily. LDH family. In terms of assembly, homotetramer.

Its subcellular location is the cytoplasm. The catalysed reaction is (S)-lactate + NAD(+) = pyruvate + NADH + H(+). Its pathway is fermentation; pyruvate fermentation to lactate; (S)-lactate from pyruvate: step 1/1. Catalyzes the conversion of lactate to pyruvate. This Mesoplasma florum (strain ATCC 33453 / NBRC 100688 / NCTC 11704 / L1) (Acholeplasma florum) protein is L-lactate dehydrogenase.